Reading from the N-terminus, the 337-residue chain is Vacuolar protein sorting-associated protein 26B-B (337 aa).

The disordered stretch occupies residues 313-337 (RFEGTSHPETRPQHSGAAALEQEHE).

Belongs to the VPS26 family. As to quaternary structure, component of the heterotrimeric retromer cargo-selective complex (CSC) which is believed to associate with variable sorting nexins to form functionally distinct retromer complex variants.

The protein resides in the cytoplasm. The protein localises to the membrane. It localises to the endosome. Its function is as follows. Acts as a component of the retromer cargo-selective complex (CSC). The CSC is believed to be the core functional component of retromer or respective retromer complex variants acting to prevent missorting of selected transmembrane cargo proteins into the lysosomal degradation pathway. Retromer mediates retrograde transport of cargo proteins from endosomes to the trans-Golgi network (TGN). The protein is Vacuolar protein sorting-associated protein 26B-B (vps26b-b) of Xenopus laevis (African clawed frog).